Consider the following 310-residue polypeptide: Delta(1)-pyrroline-2-carboxylate reductase 1 (310 aa).

The protein belongs to the ornithine cyclodeaminase/mu-crystallin family.

The catalysed reaction is L-proline + NAD(+) = 1-pyrroline-2-carboxylate + NADH + H(+). It catalyses the reaction L-proline + NADP(+) = 1-pyrroline-2-carboxylate + NADPH + H(+). Its function is as follows. Catalyzes the reduction of Delta(1)-pyrroline-2-carboxylate (Pyr2C) to L-proline, using NADPH as the electron donor. May be involved in a degradation pathway that converts trans-3-hydroxy-L-proline (t3LHyp) to L-proline. The polypeptide is Delta(1)-pyrroline-2-carboxylate reductase 1 (Burkholderia multivorans (strain ATCC 17616 / 249)).